We begin with the raw amino-acid sequence, 414 residues long: Small ribosomal subunit protein mS46 (414 aa).

Residues 20-35 (LNAQQQQRPFSSTTTR) show a composition bias toward polar residues. 2 disordered regions span residues 20–71 (LNAQ…EAAV) and 168–229 (AGPG…DAPP). Composition is skewed to low complexity over residues 45-59 (PAAA…APGP) and 168-200 (AGPG…PFGA). The segment covering 205 to 224 (PAGDKKRSGGSGDKRPRGDD) has biased composition (basic and acidic residues).

This sequence belongs to the mitochondrion-specific ribosomal protein mS46 family. In terms of assembly, component of the mitochondrial small ribosomal subunit (mt-SSU). Mature N.crassa 74S mitochondrial ribosomes consist of a small (37S) and a large (54S) subunit. The 37S small subunit contains a 16S ribosomal RNA (16S mt-rRNA) and 32 different proteins. The 54S large subunit contains a 23S rRNA (23S mt-rRNA) and 42 different proteins.

It is found in the mitochondrion. Its function is as follows. Component of the mitochondrial ribosome (mitoribosome), a dedicated translation machinery responsible for the synthesis of mitochondrial genome-encoded proteins, including at least some of the essential transmembrane subunits of the mitochondrial respiratory chain. The mitoribosomes are attached to the mitochondrial inner membrane and translation products are cotranslationally integrated into the membrane. The polypeptide is Small ribosomal subunit protein mS46 (rsm28) (Neurospora crassa (strain ATCC 24698 / 74-OR23-1A / CBS 708.71 / DSM 1257 / FGSC 987)).